Reading from the N-terminus, the 150-residue chain is Ribosome maturation factor RimP (150 aa).

It belongs to the RimP family.

The protein resides in the cytoplasm. Required for maturation of 30S ribosomal subunits. This is Ribosome maturation factor RimP from Acidithiobacillus ferrooxidans (strain ATCC 23270 / DSM 14882 / CIP 104768 / NCIMB 8455) (Ferrobacillus ferrooxidans (strain ATCC 23270)).